The sequence spans 158 residues: Crossover junction endodeoxyribonuclease RuvC (158 aa).

Active-site residues include Asp-7, Glu-66, and Asp-139. Mg(2+)-binding residues include Asp-7, Glu-66, and Asp-139.

Belongs to the RuvC family. In terms of assembly, homodimer which binds Holliday junction (HJ) DNA. The HJ becomes 2-fold symmetrical on binding to RuvC with unstacked arms; it has a different conformation from HJ DNA in complex with RuvA. In the full resolvosome a probable DNA-RuvA(4)-RuvB(12)-RuvC(2) complex forms which resolves the HJ. Mg(2+) serves as cofactor.

Its subcellular location is the cytoplasm. The catalysed reaction is Endonucleolytic cleavage at a junction such as a reciprocal single-stranded crossover between two homologous DNA duplexes (Holliday junction).. Its function is as follows. The RuvA-RuvB-RuvC complex processes Holliday junction (HJ) DNA during genetic recombination and DNA repair. Endonuclease that resolves HJ intermediates. Cleaves cruciform DNA by making single-stranded nicks across the HJ at symmetrical positions within the homologous arms, yielding a 5'-phosphate and a 3'-hydroxyl group; requires a central core of homology in the junction. The consensus cleavage sequence is 5'-(A/T)TT(C/G)-3'. Cleavage occurs on the 3'-side of the TT dinucleotide at the point of strand exchange. HJ branch migration catalyzed by RuvA-RuvB allows RuvC to scan DNA until it finds its consensus sequence, where it cleaves and resolves the cruciform DNA. This Nitratiruptor sp. (strain SB155-2) protein is Crossover junction endodeoxyribonuclease RuvC.